The chain runs to 293 residues: Formamidopyrimidine-DNA glycosylase (293 aa).

Pro2 (schiff-base intermediate with DNA) is an active-site residue. Residue Glu3 is the Proton donor of the active site. Lys58 serves as the catalytic Proton donor; for beta-elimination activity. DNA is bound by residues His104, Arg127, and Arg170. The segment at 257 to 293 adopts an FPG-type zinc-finger fold; sequence SVYGREGKPCRNPACGGTVERVVQSGRSTFFCASCQT. The active-site Proton donor; for delta-elimination activity is the Arg283.

The protein belongs to the FPG family. Monomer. Zn(2+) serves as cofactor.

It carries out the reaction Hydrolysis of DNA containing ring-opened 7-methylguanine residues, releasing 2,6-diamino-4-hydroxy-5-(N-methyl)formamidopyrimidine.. The catalysed reaction is 2'-deoxyribonucleotide-(2'-deoxyribose 5'-phosphate)-2'-deoxyribonucleotide-DNA = a 3'-end 2'-deoxyribonucleotide-(2,3-dehydro-2,3-deoxyribose 5'-phosphate)-DNA + a 5'-end 5'-phospho-2'-deoxyribonucleoside-DNA + H(+). Its function is as follows. Involved in base excision repair of DNA damaged by oxidation or by mutagenic agents. Acts as a DNA glycosylase that recognizes and removes damaged bases. Has a preference for oxidized purines, such as 7,8-dihydro-8-oxoguanine (8-oxoG). Has AP (apurinic/apyrimidinic) lyase activity and introduces nicks in the DNA strand. Cleaves the DNA backbone by beta-delta elimination to generate a single-strand break at the site of the removed base with both 3'- and 5'-phosphates. This Brucella ovis (strain ATCC 25840 / 63/290 / NCTC 10512) protein is Formamidopyrimidine-DNA glycosylase.